The chain runs to 234 residues: 1-(5-phosphoribosyl)-5-[(5-phosphoribosylamino)methylideneamino] imidazole-4-carboxamide isomerase (234 aa).

Residue Asp-9 is the Proton acceptor of the active site. The Proton donor role is filled by Asp-131.

It belongs to the HisA/HisF family.

The protein localises to the cytoplasm. It carries out the reaction 1-(5-phospho-beta-D-ribosyl)-5-[(5-phospho-beta-D-ribosylamino)methylideneamino]imidazole-4-carboxamide = 5-[(5-phospho-1-deoxy-D-ribulos-1-ylimino)methylamino]-1-(5-phospho-beta-D-ribosyl)imidazole-4-carboxamide. It functions in the pathway amino-acid biosynthesis; L-histidine biosynthesis; L-histidine from 5-phospho-alpha-D-ribose 1-diphosphate: step 4/9. This is 1-(5-phosphoribosyl)-5-[(5-phosphoribosylamino)methylideneamino] imidazole-4-carboxamide isomerase from Staphylococcus aureus (strain JH1).